The sequence spans 212 residues: Ion-translocating oxidoreductase complex subunit G (212 aa).

The chain crosses the membrane as a helical span at residues 9 to 29 (GLLLGLFALLCTGLVAIVNQL). At Thr176 the chain carries FMN phosphoryl threonine.

This sequence belongs to the RnfG family. In terms of assembly, the complex is composed of six subunits: RnfA, RnfB, RnfC, RnfD, RnfE and RnfG. It depends on FMN as a cofactor.

It is found in the cell inner membrane. Its function is as follows. Part of a membrane-bound complex that couples electron transfer with translocation of ions across the membrane. This Shewanella piezotolerans (strain WP3 / JCM 13877) protein is Ion-translocating oxidoreductase complex subunit G.